A 362-amino-acid polypeptide reads, in one-letter code: Adenosine deaminase (362 aa).

Zn(2+) is bound by residues H19 and H21. Positions 21, 23, and 181 each coordinate substrate. H208 serves as a coordination point for Zn(2+). Catalysis depends on E211, which acts as the Proton donor. Residue D300 coordinates Zn(2+).

The protein belongs to the metallo-dependent hydrolases superfamily. Adenosine and AMP deaminases family. Adenosine deaminase subfamily. The cofactor is Zn(2+).

It catalyses the reaction adenosine + H2O + H(+) = inosine + NH4(+). The enzyme catalyses 2'-deoxyadenosine + H2O + H(+) = 2'-deoxyinosine + NH4(+). Functionally, catalyzes the hydrolytic deamination of adenosine and 2-deoxyadenosine. The chain is Adenosine deaminase from Mycobacterium ulcerans (strain Agy99).